Consider the following 52-residue polypeptide: UPF0391 membrane protein XOO4217 (52 aa).

2 consecutive transmembrane segments (helical) span residues 5-25 (AMIF…GIAG) and 27-47 (ATNI…ISMF).

The protein belongs to the UPF0391 family.

The protein localises to the cell membrane. This is UPF0391 membrane protein XOO4217 from Xanthomonas oryzae pv. oryzae (strain KACC10331 / KXO85).